The chain runs to 426 residues: Tachykinins (426 aa).

Positions 1 to 116 (MQCDFRVHQD…IEDNLSHEFE (116 aa)) are excised as a propeptide. Arginine amide is present on Arg-127. Positions 131 to 145 (GYLTPDFEDSYFRDE) are excised as a propeptide. Arg-156 bears the Arginine amide mark. Positions 160 to 167 (VVSDDDYY) are excised as a propeptide. Residue Arg-178 is modified to Arginine amide. The propeptide occupies 182–235 (SLEEVLGEIEKKAAMDYYDTRDKKTYVFEYPEDYEKRLLASIRGKLKEFPMEWE). Arg-246 bears the Arginine amide mark. A propeptide spanning residues 250 to 259 (SLLDEIEELE) is cleaved from the precursor. Arg-270 is modified (arginine amide). Positions 274–291 (NALENYIDYYLDPDMDFD) are excised as a propeptide. Residues 299–329 (QGMRGKKDSDKRAPMGFQGMRGKRNTGQRFD) are disordered. The residue at position 302 (Arg-302) is an Arginine amide. Positions 306-308 (DSD) are excised as a propeptide. Residue Arg-319 is modified to Arginine amide. The propeptide occupies 323-358 (NTGQRFDTGINFNIRSSNEYQGTNNRRNALASCQLE). An arginine amide mark is found at Arg-369 and Arg-386. A propeptide spanning residues 390–426 (WATAPYEDDSPFISVFDNTERIGVDGDSPAILGNSIS) is cleaved from the precursor.

Belongs to the tachykinin family. As to expression, tachykinins (TK) are expressed throughout the nervous system. APMGFQGMR-amide is also expressed in the retrocerebral complex (at protein level).

The protein resides in the secreted. Functionally, tachykinins are active peptides which excite neurons, evoke behavioral responses, are potent vasodilators and secretagogues, and contract (directly or indirectly) many smooth muscles. The polypeptide is Tachykinins (Camponotus floridanus (Florida carpenter ant)).